A 324-amino-acid chain; its full sequence is bZIP transcription factor 46 (324 aa).

The interval 106 to 127 (LGGSDDEDPAAAAAAAAPAQRQ) is disordered. Low complexity predominate over residues 115-124 (AAAAAAAAPA). A bZIP domain is found at 242 to 287 (VERRQRRMIKNRESAARSRARKQAYIMELEAEVAKLKEQKAELQKK). The tract at residues 244-263 (RRQRRMIKNRESAARSRARK) is basic motif. Positions 270–284 (LEAEVAKLKEQKAEL) are leucine-zipper.

As to quaternary structure, interacts with MODD. Interacts with SAPK2, SAPK6 and SAPK9. Post-translationally, phosphorylated on serine and threonine residues by SAPK2, SAPK6 and SAPK9. Phosphorylation is required for full transactivation activity. Expressed in roots, shoots, leaves, flag leaves, stems, flowers and panicles. Widely expressed.

It is found in the nucleus. Its function is as follows. Transcription factor involved in abscisic acid (ABA) signaling pathway. Transcription factor activity is fully activated by ABA. Acts as a positive regulator of the expression of abiotic stress-responsive genes through an ABA-dependent signaling pathway. Acts as a positive regulator of ABA signaling and drought stress tolerance. Plays an important role in ABA and auxin responses. Involved in ABA signaling and stress responses by directly binding to the ABA-responsive element (ABRE)-containing genes, especially WRKY family genes. Modulates response to auxin. Suppresses auxin signaling by targeting ABRE-containing genes related to auxin metabolism or signaling. The sequence is that of bZIP transcription factor 46 from Oryza sativa subsp. japonica (Rice).